Here is a 325-residue protein sequence, read N- to C-terminus: Interferon regulatory factor 1 (325 aa).

Residues 5–113 (RMRMRPWLEM…SAVRVYRMLP (109 aa)) constitute a DNA-binding region (IRF tryptophan pentad repeat). Position 78 is an N6-acetyllysine (Lys78). Residues 92 to 165 (EEVKDQSRNK…TLPDDHSSYT (74 aa)) form a disordered region. Positions 141–157 (GDSSPDTFSDGLSSSTL) are enriched in polar residues. Glycyl lysine isopeptide (Lys-Gly) (interchain with G-Cter in SUMO) cross-links involve residues Lys275 and Lys299.

This sequence belongs to the IRF family. As to quaternary structure, monomer. Homodimer. Interacts with EP300. Interacts with MYD88. Interacts with PIAS3. Interacts with SPOP. Phosphorylated by CK2 and this positively regulates its activity. In terms of processing, sumoylation represses the transcriptional activity and displays enhanced resistance to protein degradation. Sumoylated by UBE2I/UBC9 and SUMO1. Inactivates the tumor suppressor activity. Elevated levels in tumor cells. Major site is Lys-275. Sumoylation is enhanced by PIAS3. Desumoylated by SENP1 in tumor cells and appears to compete with ubiquitination on C-terminal sites. Post-translationally, ubiquitinated in a SPOP-depedent manner. Appears to compete with sumoylation on C-terminal sites.

It localises to the nucleus. Its subcellular location is the cytoplasm. Activated by MYD88. Functionally, transcriptional regulator which displays a remarkable functional diversity in the regulation of cellular responses. Regulates transcription of IFN and IFN-inducible genes, host response to viral and bacterial infections, regulation of many genes expressed during hematopoiesis, inflammation, immune responses and cell proliferation and differentiation, regulation of the cell cycle and induction of growth arrest and programmed cell death following DNA damage. Stimulates both innate and acquired immune responses through the activation of specific target genes and can act as a transcriptional activator and repressor regulating target genes by binding to an interferon-stimulated response element (ISRE) in their promoters. Has an essentail role in IFNG-dependent immunity to mycobacteria. Competes with the transcriptional repressor ZBED2 for binding to a common consensus sequence in gene promoters. Its target genes for transcriptional activation activity include: genes involved in anti-viral response, such as IFN-alpha/beta, RIGI, TNFSF10/TRAIL, ZBP1, OAS1/2, PIAS1/GBP, EIF2AK2/PKR and RSAD2/viperin; antibacterial response, such as GBP2, GBP5 and NOS2/INOS; anti-proliferative response, such as p53/TP53, LOX and CDKN1A; apoptosis, such as BBC3/PUMA, CASP1, CASP7 and CASP8; immune response, such as IL7, IL12A/B and IL15, PTGS2/COX2 and CYBB; DNA damage responses and DNA repair, such as POLQ/POLH; MHC class I expression, such as TAP1, PSMB9/LMP2, PSME1/PA28A, PSME2/PA28B and B2M and MHC class II expression, such as CIITA; metabolic enzymes, such as ACOD1/IRG1. Represses genes involved in anti-proliferative response, such as BIRC5/survivin, CCNB1, CCNE1, CDK1, CDK2 and CDK4 and in immune response, such as FOXP3, IL4, ANXA2 and TLR4. Stimulates p53/TP53-dependent transcription through enhanced recruitment of EP300 leading to increased acetylation of p53/TP53. Plays an important role in immune response directly affecting NK maturation and activity, macrophage production of IL12, Th1 development and maturation of CD8+ T-cells. Also implicated in the differentiation and maturation of dendritic cells and in the suppression of regulatory T (Treg) cells development. Acts as a tumor suppressor and plays a role not only in antagonism of tumor cell growth but also in stimulating an immune response against tumor cells. This Homo sapiens (Human) protein is Interferon regulatory factor 1 (IRF1).